The following is a 182-amino-acid chain: uncharacterized protein (182 aa).

Disordered stretches follow at residues 1–73 (MMSG…YRSL) and 105–182 (SMST…HLNR). 2 stretches are compositionally biased toward low complexity: residues 43–68 (RPSP…ETSS) and 105–121 (SMST…SPVT). A compositionally biased stretch (pro residues) spans 122 to 131 (APAPPPPPTS).

This is an uncharacterized protein from Caenorhabditis elegans.